The chain runs to 55 residues: Mitochondrial import receptor subunit TOM7 homolog (55 aa).

Over 1-20 (MVKLSKEAKQRLQQLFKGGQ) the chain is Cytoplasmic. Residues 21-40 (FAIRWGFIPLVIYLGFTRGA) traverse the membrane as a helical segment. The Mitochondrial intermembrane portion of the chain corresponds to 41–55 (DPGMPEPSVLSLLWG).

It belongs to the Tom7 family. As to quaternary structure, forms part of the preprotein translocase complex of the outer mitochondrial membrane (TOM complex) which consists of at least 7 different proteins (TOMM5, TOMM6, TOMM7, TOMM20, TOMM22, TOMM40 and TOMM70).

It localises to the mitochondrion outer membrane. Its function is as follows. Required for assembly and stability of the TOM complex. Positive regulator of PRKN translocation to damaged mitochondria. Acts probably by stabilizing PINK1 on the outer membrane of depolarized mitochondria. This chain is Mitochondrial import receptor subunit TOM7 homolog (Tomm7), found in Mus musculus (Mouse).